The primary structure comprises 256 residues: Probable S-methyl-5'-thioinosine phosphorylase (256 aa).

Phosphate contacts are provided by residues threonine 10 and 47 to 48 (RH). Methionine 178 lines the substrate pocket. Threonine 179 lines the phosphate pocket. 202–204 (NYA) contributes to the substrate binding site.

Belongs to the PNP/MTAP phosphorylase family. MTAP subfamily. In terms of assembly, homotrimer.

It carries out the reaction S-methyl-5'-thioinosine + phosphate = 5-(methylsulfanyl)-alpha-D-ribose 1-phosphate + hypoxanthine. The protein operates within purine metabolism; purine nucleoside salvage. Its function is as follows. Catalyzes the reversible phosphorylation of S-methyl-5'-thioinosine (MTI) to hypoxanthine and 5-methylthioribose-1-phosphate. Involved in the breakdown of S-methyl-5'-thioadenosine (MTA), a major by-product of polyamine biosynthesis. Catabolism of (MTA) occurs via deamination to MTI and phosphorolysis to hypoxanthine. This is Probable S-methyl-5'-thioinosine phosphorylase from Methanopyrus kandleri (strain AV19 / DSM 6324 / JCM 9639 / NBRC 100938).